The primary structure comprises 145 residues: 3-hydroxyacyl-[acyl-carrier-protein] dehydratase FabZ (145 aa).

The active site involves His-47.

Belongs to the thioester dehydratase family. FabZ subfamily.

The protein localises to the cytoplasm. It carries out the reaction a (3R)-hydroxyacyl-[ACP] = a (2E)-enoyl-[ACP] + H2O. Involved in unsaturated fatty acids biosynthesis. Catalyzes the dehydration of short chain beta-hydroxyacyl-ACPs and long chain saturated and unsaturated beta-hydroxyacyl-ACPs. The polypeptide is 3-hydroxyacyl-[acyl-carrier-protein] dehydratase FabZ (Thiobacillus denitrificans (strain ATCC 25259 / T1)).